The sequence spans 89 residues: Small ribosomal subunit protein bS20 (89 aa).

The protein belongs to the bacterial ribosomal protein bS20 family.

Binds directly to 16S ribosomal RNA. This Wolbachia pipientis wMel protein is Small ribosomal subunit protein bS20.